The sequence spans 502 residues: Keratin, type II microfibrillar, component 5 (502 aa).

Blocked amino end (Ser) is present on S1. The segment at 1–122 (SCRSYRISPG…PNAQCVKHQE (122 aa)) is head. Residues 122-433 (EKEQIKNLNS…RLLEGEEQRL (312 aa)) enclose the IF rod domain. The segment at 123-157 (KEQIKNLNSRFAAFIDKVRFLEQQNKLLETKWQFY) is coil 1A. The tract at residues 158-167 (QNQRCCESNL) is linker 1. The coil 1B stretch occupies residues 168–268 (EPLFNGYIET…YDEEIQILNA (101 aa)). K228 is covalently cross-linked (Glycyl lysine isopeptide (Lys-Gly) (interchain with G-Cter in SUMO1)). Residues 269–285 (HISDTSVIVKMDNSRDL) are linker 12. The segment at 286–429 (NMDCVVAEIK…ATYRRLLEGE (144 aa)) is coil 2. Residues 430–502 (EQRLCEGVGS…CGSSRSVRFA (73 aa)) are tail.

The protein belongs to the intermediate filament family. In terms of tissue distribution, hard keratin wool.

In terms of biological role, wool microfibrillar keratin. The polypeptide is Keratin, type II microfibrillar, component 5 (Ovis aries (Sheep)).